The sequence spans 40 residues: uncharacterized protein (40 aa).

This is an uncharacterized protein from Dictyostelium discoideum (Social amoeba).